Here is a 32-residue protein sequence, read N- to C-terminus: Dermaseptin-L1 (32 aa).

Expressed by the skin glands.

The protein resides in the secreted. Its function is as follows. Antimicrobial peptide active against the Gram-negative bacterium E.coli (MIC=8 uM) but inactive against the Gram-positive bacterium S.aureus. Also inhibits growth of zoospores of the chytrid fungus B.dendrobatidis at high concentrations (above 25 uM). Shows anticancer activities since it is cytolytic against HepG2 human hepatoma-derived cells (LC(50)=45 uM). Is only weakly hemolytic on human erythrocytes. The protein is Dermaseptin-L1 of Agalychnis lemur (Lemur leaf frog).